The chain runs to 677 residues: Forkhead box protein P1 (677 aa).

The segment covering 1-18 has biased composition (polar residues); the sequence is MMQESGTETKSNGSAIQN. The disordered stretch occupies residues 1-43; it reads MMQESGTETKSNGSAIQNGSGGSNHLLECGGLREGRSNGETPA. S83 is modified (phosphoserine). Residues 270–283 show a composition bias toward polar residues; the sequence is IMNPHASTNGQLSV. Positions 270 to 298 are disordered; that stretch reads IMNPHASTNGQLSVHTPKRESLSHEEHPH. The span at 286–298 shows a compositional bias: basic and acidic residues; that stretch reads PKRESLSHEEHPH. Residue K287 forms a Glycyl lysine isopeptide (Lys-Gly) (interchain with G-Cter in SUMO2) linkage. A C2H2-type zinc finger spans residues 306 to 331; that stretch reads GVCKWPGCEAVCEDFQSFLKHLNSEH. The leucine-zipper stretch occupies residues 348-369; that stretch reads VQQLELQLAKDKERLQAMMTHL. Glycyl lysine isopeptide (Lys-Gly) (interchain with G-Cter in SUMO2) cross-links involve residues K372 and K377. The interval 382–386 is CTBP1-binding; it reads PLNLV. Polar residues predominate over residues 390 to 403; the sequence is TLSKSASEASPQSL. The interval 390–422 is disordered; it reads TLSKSASEASPQSLPHTPTTPTAPLTPVTQGPS. The span at 404–418 shows a compositional bias: low complexity; sequence PHTPTTPTAPLTPVT. K442 is covalently cross-linked (Glycyl lysine isopeptide (Lys-Gly) (interchain with G-Cter in SUMO2)). A DNA-binding region (fork-head) is located at residues 465-555; sequence RPPFTYASLI…PQKISGNPSL (91 aa). Positions 611–677 are disordered; the sequence is EHTNSNESDS…EDEPVNEDME (67 aa). The span at 612 to 623 shows a compositional bias: polar residues; the sequence is HTNSNESDSSPG. Phosphothreonine is present on T653. The residue at position 658 (S658) is a Phosphoserine. Acidic residues predominate over residues 667 to 677; sequence YEDEPVNEDME.

In terms of assembly, forms homodimers and heterodimers with FOXP2 and FOXP4. Dimerization is required for DNA-binding. Self-associates. Interacts with CTBP1. Interacts with NCOR2 and AR. Interacts with FOXP2. Interacts with TBR1. Interacts with AURKA; this interaction facilitates the phosphorylation of FOXP1, which suppresses the expression of FBXL7. Interacts with ZMYM2. In terms of tissue distribution, isoform 8 is specifically expressed in embryonic stem cells.

Its subcellular location is the nucleus. Transcriptional repressor. Can act with CTBP1 to synergistically repress transcription but CTPBP1 is not essential. Plays an important role in the specification and differentiation of lung epithelium. Acts cooperatively with FOXP4 to regulate lung secretory epithelial cell fate and regeneration by restricting the goblet cell lineage program; the function may involve regulation of AGR2. Essential transcriptional regulator of B-cell development. Involved in regulation of cardiac muscle cell proliferation. Involved in the columnar organization of spinal motor neurons. Promotes the formation of the lateral motor neuron column (LMC) and the preganglionic motor column (PGC) and is required for respective appropriate motor axon projections. The segment-appropriate generation of spinal cord motor columns requires cooperation with other Hox proteins. Can regulate PITX3 promoter activity; may promote midbrain identity in embryonic stem cell-derived dopamine neurons by regulating PITX3. Negatively regulates the differentiation of T follicular helper cells T(FH)s. Involved in maintenance of hair follicle stem cell quiescence; the function probably involves regulation of FGF18. Represses transcription of various pro-apoptotic genes and cooperates with NF-kappa B-signaling in promoting B-cell expansion by inhibition of caspase-dependent apoptosis. Binds to CSF1R promoter elements and is involved in regulation of monocyte differentiation and macrophage functions; repression of CSF1R in monocytes seems to involve NCOR2 as corepressor. Involved in endothelial cell proliferation, tube formation and migration indicative for a role in angiogenesis; the role in neovascularization seems to implicate suppression of SEMA5B. Can negatively regulate androgen receptor signaling. Acts as a transcriptional activator of the FBXL7 promoter; this activity is regulated by AURKA. Its function is as follows. Involved in transcriptional regulation in embryonic stem cells (ESCs). Stimulates expression of transcription factors that are required for pluripotency and decreases expression of differentiation-associated genes. Has distinct DNA-binding specifities as compared to the canonical form and preferentially binds DNA with the sequence 5'-CGATACAA-3' (or closely related sequences). Promotes ESC self-renewal and pluripotency. The protein is Forkhead box protein P1 (FOXP1) of Homo sapiens (Human).